The chain runs to 618 residues: Glucose starvation modulator protein 1 (618 aa).

Residues 20-48 (CEFCHTKHIQCDVGRPCQNCLKRNIGKFC) constitute a DNA-binding region (zn(2)-C6 fungal-type). The interval 325–352 (ANANTHPSHNAKLESECDSSSHSDADLE) is disordered. Residues 335 to 352 (AKLESECDSSSHSDADLE) show a composition bias toward basic and acidic residues. A PAS domain is found at 466–538 (LLDLENMAKL…QIFNELLAFG (73 aa)).

The protein belongs to the ERT1/acuK family.

The protein localises to the nucleus. Functionally, transcription factor which regulates nonfermentable carbon utilization. Binds specifically to 5'-CGGN(8)CGG-3' and 5'-CGGN(9)CGG-3' sequences in the promoter region. This chain is Glucose starvation modulator protein 1 (GSM1), found in Saccharomyces cerevisiae (strain RM11-1a) (Baker's yeast).